Here is a 1899-residue protein sequence, read N- to C-terminus: MILKSFILGNLVSLCMKIINSAVVVGLYYGFLTTFSIGPSYLFLLRARVMEEGTEKEVSATTGFITGQLMMFISIYYVPLHLALVRPHTITVLVLPYLLFHFFWNNHKNFFDYGYTTRNSMRNLSIQCLFLNNLIVQFLNLFILPSSTLSRLVNISLFRCNNKMLFVTSSFVGWLIGHILFMKLVGLVLVCIRQNLATRSNRLLHSNMYLVSEFRNWTARIFSTLLFITCMYYLGVHRVKLPILTNRLKKTSEIAEQKKSKEETDEEIEKTFETKETKKEQQEFTDKVHSLYFEEQEDPIEEQGYPYKRNETKEKRLGKEKTKDEFHKNIPKYETLDLDRNQEKKLELTILKQKTNLVWFEKPLVTLLFDVKRWDRPLRHIKNSRFENTIKQEMAQYFFHTCTSDGKQKISFTYPPSLSTFFEMMQRKISLCTIEKQSPENMYNHWLYTNEQKRHNLSNEFLNRIEILDKGSSALDVLEQKNRLSNDENKQECLPKMYDPFLSGPSRGRIKKGYSTRRIMNDSSASTKGKKVWINKIHGIFPIDYVQLEHKIDTFLDESLSGESGTSFPGESAPLKGLSLSTDKKRIDSENQEKSLKFLFDVVTTNPNTQTRDKESILIREIHKRVPQWSYKLIRDLEEEEKETEEEPKQVFGIRLRKGKRVVIYTDTNDKTNTDTSTSTPSNPAEEIALIRYSHQPDFRRNLIKGSIRSQRRKTVVWELFQTNLHSPLFLDRIDKTFSFDIYRIMDLFFRSWMWKEPELKTSKSESEVEEKEEKVKKQKEKKDENERIAIAEAWDTFIVTQAVRGLMLVTQSIFRKYIVLPSLIIVKNIGRMLLFQFPEWSEDFKDWKREMHVKCTYNGVQLSETEFPKHWLTDGIQIKILFPFCLKPWHESKLRSHHITHEHEMDAMKKKGKEQNFCFLTVWGMEAELPFGYARKRPSFFEPIFKELTKKIQKVKKICFLVLRTFKEGAKGLVKVLKEKASWVIKIVLFIKKKIKELAKIFFFGFGLREVEVEVYESNENGKDSITNNNIINELPIRIRSVNWTNDSLTEKKIKDLADRTTTIQNEIERIKKEKKILFMTPDKNVSPNKLSCNDKRSESQKFFWQISKRKGARLIRKWHYFFKSFIERIYIGIFLCTIYIPKINAKLFLESKKNLQKFFDKSIYNNETNPDGIDETNKNAVHFISTLKKALFNISDKNSSISCDLSYLSQAYVFYKLSQTQVINKYDLRYVFQYQGAHSFLKDRIKDYLQTRGIFHSESRQNPFRNSEINDWKNWLRGHYQYNLSQTRWSRLVPQQWKNRVNQRHRIQKKDSQKWHSYEQDQLIHYKTKKNYAVHSLPMQKEKLKKHYRYDLLSHKYLNFEDRNNSYIYGSPLQVNGDREITYNYKTHKSKSFCTLGGLTISDYLKEEYLIDTDKNSDRKYFDLGIIYFSLRKNIDIKAWIDKNIGTNTNININKKIKTGNTFYQISDKKNLFDLTISQQRNSSNQKTKKTKKFGFLDWMGMNKQMLDHSISNFEPSWFLPEFCLLYDAYKVKPWIMPTKLLLLNLDTNENIRNQNENIRKSNKINGNKKQDFRISSNPKDYLELDNGTPKEKEKQGKVKGNLGSNQKTRENLGLDLRNQQKNVENDYVGSDIKKRRKKKQFNNNKETELDSILTNYLVFQLRWNPFLNKGIMKNIKVDCLLLRLINPKEIAIDSIQSGEMHLDLMSIQRDPSLTKLIKDGIFVIEPRRLSIKRDGQFIKYQTIGISLVHKRKYQTNRGYPENKYIDENDFYGSISQHGKMFVNGDENHYDLIVPENILSTRRRRELRIRNCLNSGNTENRNPVFFDSTNVRNCGKFLDEDKYLDTDIQKLIKFKLFLWPNFRLEDLACINRYWFDTNNGSRFSMLRIHMYPRFIVS.

The next 6 helical transmembrane spans lie at 23–43, 64–84, 87–107, 124–144, 172–192, and 217–237; these read VVVG…SYLF, FITG…HLAL, PHTI…WNNH, LSIQ…LFIL, VGWL…LVCI, and WTAR…LGVH. 2 disordered regions span residues 256–280 and 1581–1619; these read EQKK…TKKE and PKDY…GLDL. The span at 269–280 shows a compositional bias: basic and acidic residues; it reads EKTFETKETKKE.

It belongs to the TIC214 family. Part of the Tic complex.

The protein localises to the plastid. Its subcellular location is the chloroplast inner membrane. Functionally, involved in protein precursor import into chloroplasts. May be part of an intermediate translocation complex acting as a protein-conducting channel at the inner envelope. The polypeptide is Protein TIC 214 (Ceratophyllum demersum (Rigid hornwort)).